Reading from the N-terminus, the 200-residue chain is MMMFGKISRQLFSLKKIPWSCDSRYFWEWLNTVFNKVDYERIKDVGPDRAASEWLLRCGAKVRYCGHQKWLQDYNKLPGGSVDRYKIQAIDATDSCIMDIGFDHLVGLEHVERITLCRCHYIEDNCLQRLSQLENLRKSLLELEIIACGNVTDNGVIALRHFKNLKYLFLSDLPGIKDKEYLAEVFTKALPSLELKLNLK.

The N-terminal 25 residues, 1 to 25 (MMMFGKISRQLFSLKKIPWSCDSRY), are a transit peptide targeting the mitochondrion. Residues 1–61 (MMMFGKISRQ…SEWLLRCGAK (61 aa)) are N-terminal domain. Mg(2+) is bound at residue Gly-59. LRR repeat units follow at residues 62 to 87 (VRYCGHQKWLQDYNKLPGGSVDRYKI), 88 to 116 (QAIDATDSCIMDIGFDHLVGLEHVERITL), 117 to 141 (CRCHYIEDNCLQRLSQLENLRKSLL), and 142 to 173 (ELEIIACGNVTDNGVIALRHFKNLKYLFLSDL). Position 93 (Thr-93) interacts with Mg(2+).

Belongs to the ATP synthase subunit s family. Homotetramer. Associates with ATP synthase.

It is found in the mitochondrion. The protein localises to the mitochondrion inner membrane. Its function is as follows. Involved in regulation of mitochondrial membrane ATP synthase. Necessary for H(+) conduction of ATP synthase. Facilitates energy-driven catalysis of ATP synthesis by blocking a proton leak through an alternative proton exit pathway. In Rattus norvegicus (Rat), this protein is ATP synthase subunit s, mitochondrial.